The sequence spans 492 residues: Coagulation factor X (492 aa).

A signal peptide spans 1-23 (MAGLLHLVLLSTALGGLLRPAGS). Positions 24-40 (VFLPRDQAHRVLQRARR) are excised as a propeptide. The Gla domain maps to 41–85 (ANSFLEEVKQGNLERECLEEACSLEEAREVFEDAEQTDEFWSKYK). A 4-carboxyglutamate mark is found at E46, E47, E54, E56, E59, E60, E65, E66, E69, E72, E75, and E79. A disulfide bridge links C57 with C62. Residues 86–122 (DGDQCEGHPCLNQGHCKDGIGDYTCTCAEGFEGKNCE) enclose the EGF-like 1; calcium-binding domain. Disulfide bonds link C90/C101, C95/C110, C112/C121, C129/C140, C136/C149, C151/C164, C172/C341, C240/C245, C260/C276, C389/C403, and C414/C442. Residue D103 is modified to (3R)-3-hydroxyaspartate. The region spanning 125–165 (TREICSLDNGGCDQFCREERSEVRCSCAHGYVLGDDSKSCV) is the EGF-like 2 domain. A propeptide spans 183 to 233 (WAIHTSEDALDASELEHYDPADLSPTESSLDLLGLNRTEPSAGEDGSQVVR) (activation peptide). Position 200 is a sulfotyrosine (Y200). A glycan (O-linked (GalNAc...) threonine) is linked at T208. N-linked (GlcNAc...) asparagine glycosylation occurs at N218. Residues 234–466 (IVGGRDCAEG…FLKWIDKIMK (233 aa)) enclose the Peptidase S1 domain. Catalysis depends on charge relay system residues H275 and D321. The active-site Charge relay system is S418. The tract at residues 472-492 (AGSRGHSEAPATWTVPPPLPL) is disordered. A propeptide spans 476-492 (GHSEAPATWTVPPPLPL) (may be removed but is not necessary for activation). A glycan (O-linked (GalNAc...) threonine) is linked at T485.

Belongs to the peptidase S1 family. The two chains are formed from a single-chain precursor by the excision of two Arg residues and are held together by 1 or more disulfide bonds. Forms a heterodimer with SERPINA5. Interacts (activated) with guianensin, an anticoagulant protein from Simulium guianense saliva. Interacts (activated) with simukunin, an anticoagulant protein from Simulium vittatum saliva. The vitamin K-dependent, enzymatic carboxylation of some glutamate residues allows the modified protein to bind calcium. Post-translationally, N- and O-glycosylated. In terms of processing, proteolytically cleaved and activated by cathepsin CTSG. The activation peptide is cleaved by factor IXa (in the intrinsic pathway), or by factor VIIa (in the extrinsic pathway). The iron and 2-oxoglutarate dependent 3-hydroxylation of aspartate and asparagine is (R) stereospecific within EGF domains.

It is found in the secreted. It catalyses the reaction Selective cleavage of Arg-|-Thr and then Arg-|-Ile bonds in prothrombin to form thrombin.. Its activity is regulated as follows. Inhibited by SERPINA5. In terms of biological role, factor Xa is a vitamin K-dependent glycoprotein that converts prothrombin to thrombin in the presence of factor Va, calcium and phospholipid during blood clotting. Factor Xa activates pro-inflammatory and pro-fibrotic signaling pathways in a protease-activated receptor (PAR)-dependent manner. In Bos taurus (Bovine), this protein is Coagulation factor X (F10).